Consider the following 62-residue polypeptide: UPF0434 protein azo1471 (62 aa).

This sequence belongs to the UPF0434 family.

In Azoarcus sp. (strain BH72), this protein is UPF0434 protein azo1471.